A 98-amino-acid polypeptide reads, in one-letter code: Putative defensin-like protein 233 (98 aa).

The signal sequence occupies residues 1–28; it reads MGMWCTTLFMVSCVSICLILSHVQEVEA. Intrachain disulfides connect cysteine 35–cysteine 96, cysteine 45–cysteine 70, cysteine 53–cysteine 86, and cysteine 68–cysteine 88.

It belongs to the DEFL family. In terms of tissue distribution, expressed at least in stem, root, rosette leaves and flower buds.

It is found in the secreted. This Arabidopsis thaliana (Mouse-ear cress) protein is Putative defensin-like protein 233 (SCRL22).